A 527-amino-acid polypeptide reads, in one-letter code: Peptide chain release factor 3 (527 aa).

The region spanning Ala9–Leu277 is the tr-type G domain. GTP is bound by residues Ser18–Thr25, Asp86–His90, and Asn140–Asp143.

It belongs to the TRAFAC class translation factor GTPase superfamily. Classic translation factor GTPase family. PrfC subfamily.

It localises to the cytoplasm. Functionally, increases the formation of ribosomal termination complexes and stimulates activities of RF-1 and RF-2. It binds guanine nucleotides and has strong preference for UGA stop codons. It may interact directly with the ribosome. The stimulation of RF-1 and RF-2 is significantly reduced by GTP and GDP, but not by GMP. This chain is Peptide chain release factor 3, found in Pseudomonas putida (strain W619).